A 390-amino-acid polypeptide reads, in one-letter code: Probable tRNA pseudouridine synthase D (390 aa).

The active-site Nucleophile is the Asp93. The 188-residue stretch at 166–353 folds into the TRUD domain; the sequence is HVLNYFGIQR…YGTRRKLITP (188 aa).

The protein belongs to the pseudouridine synthase TruD family.

The enzyme catalyses uridine(13) in tRNA = pseudouridine(13) in tRNA. In terms of biological role, could be responsible for synthesis of pseudouridine from uracil-13 in transfer RNAs. In Methanococcus vannielii (strain ATCC 35089 / DSM 1224 / JCM 13029 / OCM 148 / SB), this protein is Probable tRNA pseudouridine synthase D.